The following is a 415-amino-acid chain: Histidine--tRNA ligase (415 aa).

It belongs to the class-II aminoacyl-tRNA synthetase family. As to quaternary structure, homodimer.

Its subcellular location is the cytoplasm. It catalyses the reaction tRNA(His) + L-histidine + ATP = L-histidyl-tRNA(His) + AMP + diphosphate + H(+). The sequence is that of Histidine--tRNA ligase from Clostridium perfringens (strain ATCC 13124 / DSM 756 / JCM 1290 / NCIMB 6125 / NCTC 8237 / Type A).